A 290-amino-acid polypeptide reads, in one-letter code: Agmatinase (290 aa).

Positions 112, 135, 137, 139, 216, and 218 each coordinate Mn(2+).

The protein belongs to the arginase family. Agmatinase subfamily. Requires Mn(2+) as cofactor.

It catalyses the reaction agmatine + H2O = urea + putrescine. Its pathway is amine and polyamine biosynthesis; putrescine biosynthesis via agmatine pathway; putrescine from agmatine: step 1/1. In terms of biological role, catalyzes the formation of putrescine from agmatine. In Bacillus subtilis (strain 168), this protein is Agmatinase (speB).